A 635-amino-acid polypeptide reads, in one-letter code: Extracellular metalloproteinase 1 (635 aa).

The first 19 residues, 1 to 19, serve as a signal peptide directing secretion; it reads MHGLLLAAGLLSLPLHVLA. The propeptide occupies 20-246; it reads HPQPSTSTSL…VHNVVDYVAH (227 aa). An N-linked (GlcNAc...) asparagine glycan is attached at N287. H430 contributes to the Zn(2+) binding site. E431 is an active-site residue. H434 lines the Zn(2+) pocket. N-linked (GlcNAc...) asparagine glycans are attached at residues N475, N594, and N623.

Belongs to the peptidase M36 family. Requires Zn(2+) as cofactor.

It localises to the secreted. Secreted metalloproteinase probably acting as a virulence factor. In Arthroderma benhamiae (Trichophyton mentagrophytes), this protein is Extracellular metalloproteinase 1 (MEP1).